We begin with the raw amino-acid sequence, 159 residues long: uncharacterized protein (159 aa).

Disordered regions lie at residues 1-23 (MEQDWQPGEEVTPGPEPCSKGQA) and 91-110 (AGGGRREQSQKPCSNGGPAA).

This is an uncharacterized protein from Homo sapiens (Human).